The following is a 722-amino-acid chain: D-(-)-3-hydroxybutyrate oligomer hydrolase (722 aa).

A signal peptide spans M1–G25. S319 functions as the Charge relay system in the catalytic mechanism.

It belongs to the D-(-)-3-hydroxybutyrate oligomer hydrolase family.

The protein resides in the secreted. It catalyses the reaction (3R)-hydroxybutanoate dimer + H2O = 2 (R)-3-hydroxybutanoate + H(+). It functions in the pathway lipid metabolism; butanoate metabolism. Inhibited by diisopropylfluorophosphate (DFP). Its function is as follows. Participates in the degradation of poly-3-hydroxybutyrate (PHB). It works downstream of poly(3-hydroxybutyrate) depolymerase, hydrolyzing D(-)-3-hydroxybutyrate oligomers of various length (3HB-oligomers) into 3HB-monomers. This Ralstonia pickettii (Burkholderia pickettii) protein is D-(-)-3-hydroxybutyrate oligomer hydrolase.